The chain runs to 196 residues: Probable GTP-binding protein EngB (196 aa).

Positions 22 to 195 (NIPEIALVGR…WQWIEERMGK (174 aa)) constitute an EngB-type G domain. Residues 30–37 (GRSNVGKS), 57–61 (GKTQT), 75–78 (DVPG), 142–145 (TKID), and 174–176 (FSA) contribute to the GTP site. Mg(2+) is bound by residues Ser-37 and Thr-59.

The protein belongs to the TRAFAC class TrmE-Era-EngA-EngB-Septin-like GTPase superfamily. EngB GTPase family. It depends on Mg(2+) as a cofactor.

Necessary for normal cell division and for the maintenance of normal septation. This Limosilactobacillus reuteri (strain DSM 20016) (Lactobacillus reuteri) protein is Probable GTP-binding protein EngB.